We begin with the raw amino-acid sequence, 356 residues long: 5-formaminoimidazole-4-carboxamide-1-(beta)-D-ribofuranosyl 5'-monophosphate synthetase (356 aa).

Residues histidine 27 and serine 94 each coordinate 5-amino-1-(5-phospho-beta-D-ribosyl)imidazole-4-carboxamide. Positions 116-333 constitute an ATP-grasp domain; the sequence is RCLAWESDRE…YSDLIEKGLS (218 aa). ATP is bound by residues 145–196 and glutamate 226; that span reads AELI…TRYY. Position 255 (asparagine 255) interacts with 5-amino-1-(5-phospho-beta-D-ribosyl)imidazole-4-carboxamide. Glutamate 293 and glutamate 306 together coordinate Mg(2+).

It belongs to the phosphohexose mutase family. Mg(2+) serves as cofactor. Requires Mn(2+) as cofactor.

The enzyme catalyses 5-amino-1-(5-phospho-beta-D-ribosyl)imidazole-4-carboxamide + formate + ATP = 5-formamido-1-(5-phospho-D-ribosyl)imidazole-4-carboxamide + ADP + phosphate. It functions in the pathway purine metabolism; IMP biosynthesis via de novo pathway; 5-formamido-1-(5-phospho-D-ribosyl)imidazole-4-carboxamide from 5-amino-1-(5-phospho-D-ribosyl)imidazole-4-carboxamide (formate route): step 1/1. Functionally, catalyzes the ATP- and formate-dependent formylation of 5-aminoimidazole-4-carboxamide-1-beta-d-ribofuranosyl 5'-monophosphate (AICAR) to 5-formaminoimidazole-4-carboxamide-1-beta-d-ribofuranosyl 5'-monophosphate (FAICAR) in the absence of folates. The sequence is that of 5-formaminoimidazole-4-carboxamide-1-(beta)-D-ribofuranosyl 5'-monophosphate synthetase from Methanothrix thermoacetophila (strain DSM 6194 / JCM 14653 / NBRC 101360 / PT) (Methanosaeta thermophila).